A 370-amino-acid polypeptide reads, in one-letter code: Putative agmatine deiminase (370 aa).

Cysteine 361 (amidino-cysteine intermediate) is an active-site residue.

Belongs to the agmatine deiminase family.

It carries out the reaction agmatine + H2O = N-carbamoylputrescine + NH4(+). This Shewanella sp. (strain MR-4) protein is Putative agmatine deiminase.